The sequence spans 93 residues: Small ribosomal subunit protein uS19 (93 aa).

Belongs to the universal ribosomal protein uS19 family.

In terms of biological role, protein S19 forms a complex with S13 that binds strongly to the 16S ribosomal RNA. In Citrifermentans bemidjiense (strain ATCC BAA-1014 / DSM 16622 / JCM 12645 / Bem) (Geobacter bemidjiensis), this protein is Small ribosomal subunit protein uS19.